The chain runs to 322 residues: tRNA U34 carboxymethyltransferase (322 aa).

Carboxy-S-adenosyl-L-methionine is bound by residues lysine 92, tryptophan 106, lysine 111, glycine 131, 153–155 (DPT), 181–182 (VE), methionine 196, tyrosine 200, and arginine 315.

Belongs to the class I-like SAM-binding methyltransferase superfamily. CmoB family. In terms of assembly, homotetramer.

The enzyme catalyses carboxy-S-adenosyl-L-methionine + 5-hydroxyuridine(34) in tRNA = 5-carboxymethoxyuridine(34) in tRNA + S-adenosyl-L-homocysteine + H(+). Catalyzes carboxymethyl transfer from carboxy-S-adenosyl-L-methionine (Cx-SAM) to 5-hydroxyuridine (ho5U) to form 5-carboxymethoxyuridine (cmo5U) at position 34 in tRNAs. The chain is tRNA U34 carboxymethyltransferase from Colwellia psychrerythraea (strain 34H / ATCC BAA-681) (Vibrio psychroerythus).